Reading from the N-terminus, the 828-residue chain is Zinc finger protein 438 (828 aa).

Disordered regions lie at residues 1–29 (MQNSVSVPPKDEGESNIPSGTIQSRKGLQ), 143–173 (KSGCSKAPAQTQMCPQMSPSPPHHPELLYKP), and 193–231 (ALTNGSDHGDLRPPVTNTHGSLNPPATPASSTPEEPAKQ). Composition is skewed to polar residues over residues 16–29 (NIPSGTIQSRKGLQ) and 150–159 (PAQTQMCPQM). 3 consecutive C2H2-type zinc fingers follow at residues 507-529 (HRCHVCNHHFQFKQHLRDHMNTH), 535-557 (YSCRICRKSYVRPGSLSTHMKLH), and 567-590 (MCCEFCAKVFGHIRVYFGHLKEVH). Residues 680–721 (EGTFPGSKGTQEELVQHASPDWKRHPERGKPEKVHSSSEESH) are disordered. Positions 689 to 721 (TQEELVQHASPDWKRHPERGKPEKVHSSSEESH) are enriched in basic and acidic residues. The C2H2-type 4 zinc-finger motif lies at 776-799 (FNCLLCAEMLGRKEDLLHHWKHQH).

It belongs to the krueppel C2H2-type zinc-finger protein family. Ubiquitous.

The protein resides in the nucleus. Isoform 1 acts as a transcriptional repressor. The protein is Zinc finger protein 438 (ZNF438) of Homo sapiens (Human).